Consider the following 1690-residue polypeptide: MAGNKRKRSNASEGSDSQGNERISSLSANEATQDFPRGGASSLTPLEYKEAVLEAKKDFMESASGTAELSKKTRPKKKGSKKSSKSELDNEENLKVHIQSLRYKNITPGSLILGQIAQINTLDLAVSLPNCLTGYVPITNISDKLSDRLDSIDNHAEDNAATEEEDGLNQIPDLMDLYKVGQWVRVSVTALGSENTTKTGKRHIELSLKPQDANGSAPEAADFVAGSMIQAVVSSIEDHGIVFDIGINNYTGFLSKKHINDFPFVEGQSLLCSVISKEDRIFHLSLTATSTKALEVMPSVQAILPGDYINVLVTDIKESGVIAKYMGVVDVTSDIYHSSPVKGEDLEDKFQLAKSVPARVLFVIPGDPPKIAVSFLPHVLTFNFATPNTPHPDQLDIGFIVNAAKVTYVSSSLGVFCDVGVPEISGFAHISRLSDKKVAGISPNSGPYKVDSTHEARIINYSYVDNLYILSFQQSVLNQQFLRIEDIEVGQFVDGTIAKLIPQGIVVTISEGINGLVPSTHMADIALQFPERRFKVGSSVKCRVLSTNVLRKRVLLTLKKSLLNTDLPLIYDYEQATPGTQTVGTLARIFEDGAIVEFYNSVRAFLPVSEMSEAYIRDAREHFKVGQTLSVTIVSCDPENRKMRVGCREQSWDAKRLERFENIKAGSVLSGIVLQKTEDSVIVDLGDKVTGVITLGQLCDGDLNKCSKVMNKLRASTKLAEVLVLRKDTSKKLISLSLKKSLVEAAKENRMPINITDLKEGIKYFGFVRNATTFGVFVEFCDGLVALVPKAYISEEYVPVPSAVYKPQQSVTCVCLSVELSQEKAFMSFKPLAQKQEKAVEFMESKYDIDNPVDETIKKTYDYVAGKITWAVVTSAKASQLNVDLAANVHGRVDVSEVFDNFGEIVDPNKPLKRFHKGDKIRVRVLGIHDSRNHKFLPISHRVSPKQFLELSVRPSILNMEPFSMKEPQFKKGDEVTGFVNNVSKECVWVSLTPSVNGRIPILDLTTDVKELNSLQKHFFLGKAIKCYVVNAEDSITLSAIGPLQGFENLTPGSRLVGKVTNVNEAGAILQLPGHMSGRVSRIDMFDDYDILPETKFTRNNLVGVCVLSVDVPNRKVALSARNSRTQSQPVEIKDKEINSVDDLKIGDICRGFVCNVANQGLFVTIGHNLIARVKIGELFDTFIKDWKPHFHVNQLVKGSIVGIDNDSKRIEMSLKQSKIKDSSEITKTFADIAVGSNLDGTVVKVGDYGVLIRIDGTDNIVGLCHKSEIADAVVLNISKLYSSGDKVRAHVLDVDSEKRRIALGLKSSYFDSDSDISMSDNEEDVEMRSEDQSDTSESEVGSKDDVQSEEVENLESAGDEDEEEEPSALQANGFDWTDGSTVFDKLADDTEDSEDEEDEEPKRKKSKSDRFDDEEKDLDEIPSTAADFERQLLSSPNSSLLWISYMAYHLNLNELQEAREVGKRALSTINYREEDEKLNVWMALLNLEVAYGTEDSLKEVFKEACAYCDALIVYEKLCGILIKGGKVDLADEYMQLMLKNFKQVPSVWIQYATFLLNNDKAEKAHGLLERSLQSLPKSEHVGIIEKFAILEFKNGDPERGRTIFEGLLSSYPKRLDLWNVLIDMEMKQDDPSIVRRLFQRLLALNLSTKKAKFAFKKWLAYEKNIGDDEGAEQVKRRAIEYVSESHSEN.

Disordered regions lie at residues 1–42 and 59–90; these read MAGN…GASS and FMES…ELDN. The segment covering 11–32 has biased composition (polar residues); it reads ASEGSDSQGNERISSLSANEAT. Over residues 72-83 the composition is skewed to basic residues; it reads KTRPKKKGSKKS. 13 S1 motif domains span residues 109 to 209, 226 to 289, 306 to 376, 398 to 473, 490 to 559, 579 to 648, 666 to 739, 761 to 830, 866 to 942, 973 to 1044, 1053 to 1122, 1147 to 1216, and 1236 to 1307; these read GSLI…LSLK, GSMI…LTAT, GDYI…VSFL, GFIV…LSFQ, GQFV…LTLK, GTQT…VGCR, GSVL…LSLK, GIKY…MSFK, GKIT…ISHR, GDEV…IGPL, GSRL…LSAR, GDIC…MSLK, and GSNL…LGLK. The disordered stretch occupies residues 1313–1424; sequence SDSDISMSDN…EEKDLDEIPS (112 aa). Composition is skewed to acidic residues over residues 1348–1367, 1390–1400, and 1412–1421; these read QSEE…EEEP, DTEDSEDEEDE, and FDDEEKDLDE. Residue threonine 1391 is modified to Phosphothreonine. The residue at position 1394 (serine 1394) is a Phosphoserine. HAT repeat units follow at residues 1420 to 1452, 1526 to 1558, and 1596 to 1628; these read DEIP…YHLN, GKVD…FLLN, and GDPE…MEMK. Phosphoserine is present on residues serine 1684 and serine 1686.

Component of the ribosomal small subunit (SSU) processome.

The protein resides in the nucleus. It localises to the nucleolus. Its function is as follows. Involved in the biogenesis of rRNA. Required for the formation of 18S and 5.8S rRNA. The sequence is that of rRNA biogenesis protein rrp5 from Schizosaccharomyces pombe (strain 972 / ATCC 24843) (Fission yeast).